The chain runs to 477 residues: Putative BTB/POZ domain-containing protein R830 (477 aa).

The BTB domain occupies 13-83 (SDLELILVDK…FYGIETNNDP (71 aa)).

The protein belongs to the mimivirus BTB/WD family.

The sequence is that of Putative BTB/POZ domain-containing protein R830 from Acanthamoeba polyphaga mimivirus (APMV).